We begin with the raw amino-acid sequence, 208 residues long: Small ribosomal subunit protein uS4 (208 aa).

The 62-residue stretch at 98 to 159 (LRLDNVVFRL…RSKKVVRITE (62 aa)) folds into the S4 RNA-binding domain.

This sequence belongs to the universal ribosomal protein uS4 family. Part of the 30S ribosomal subunit. Contacts protein S5. The interaction surface between S4 and S5 is involved in control of translational fidelity.

In terms of biological role, one of the primary rRNA binding proteins, it binds directly to 16S rRNA where it nucleates assembly of the body of the 30S subunit. With S5 and S12 plays an important role in translational accuracy. The polypeptide is Small ribosomal subunit protein uS4 (Anaeromyxobacter dehalogenans (strain 2CP-1 / ATCC BAA-258)).